Here is a 349-residue protein sequence, read N- to C-terminus: tRNA N6-adenosine threonylcarbamoyltransferase (349 aa).

The Fe cation site is built by His-117 and His-121. Substrate contacts are provided by residues 140 to 144 (LVSGG), Asp-173, Gly-186, and Asn-284. Asp-312 lines the Fe cation pocket.

It belongs to the KAE1 / TsaD family. It depends on Fe(2+) as a cofactor.

It localises to the cytoplasm. The enzyme catalyses L-threonylcarbamoyladenylate + adenosine(37) in tRNA = N(6)-L-threonylcarbamoyladenosine(37) in tRNA + AMP + H(+). Functionally, required for the formation of a threonylcarbamoyl group on adenosine at position 37 (t(6)A37) in tRNAs that read codons beginning with adenine. Is involved in the transfer of the threonylcarbamoyl moiety of threonylcarbamoyl-AMP (TC-AMP) to the N6 group of A37, together with TsaE and TsaB. TsaD likely plays a direct catalytic role in this reaction. This is tRNA N6-adenosine threonylcarbamoyltransferase from Psychrobacter arcticus (strain DSM 17307 / VKM B-2377 / 273-4).